Consider the following 171-residue polypeptide: Protein-export protein SecB (171 aa).

This sequence belongs to the SecB family. In terms of assembly, homotetramer, a dimer of dimers. One homotetramer interacts with 1 SecA dimer.

The protein localises to the cytoplasm. In terms of biological role, one of the proteins required for the normal export of preproteins out of the cell cytoplasm. It is a molecular chaperone that binds to a subset of precursor proteins, maintaining them in a translocation-competent state. It also specifically binds to its receptor SecA. This Gluconacetobacter diazotrophicus (strain ATCC 49037 / DSM 5601 / CCUG 37298 / CIP 103539 / LMG 7603 / PAl5) protein is Protein-export protein SecB.